The sequence spans 255 residues: Small ribosomal subunit protein uS2 (255 aa).

The tract at residues 226–255 (QGVSNEEVAAEQNIDLDEKEKSEETEATEE) is disordered.

It belongs to the universal ribosomal protein uS2 family.

In Staphylococcus aureus (strain JH1), this protein is Small ribosomal subunit protein uS2.